The chain runs to 443 residues: tRNA modification GTPase MnmE (443 aa).

The (6S)-5-formyl-5,6,7,8-tetrahydrofolate site is built by Arg-23, Glu-82, and Lys-121. The TrmE-type G domain maps to 215–364 (GTSIVLAGHP…LKQFIQKWIQ (150 aa)). Asn-225 is a binding site for K(+). GTP-binding positions include 225-230 (NAGKSS), 244-250 (TDIPGTT), and 269-272 (DSAG). Ser-229 is a Mg(2+) binding site. Positions 244, 246, and 249 each coordinate K(+). Thr-250 lines the Mg(2+) pocket. (6S)-5-formyl-5,6,7,8-tetrahydrofolate is bound at residue Lys-443.

This sequence belongs to the TRAFAC class TrmE-Era-EngA-EngB-Septin-like GTPase superfamily. TrmE GTPase family. As to quaternary structure, homodimer. Heterotetramer of two MnmE and two MnmG subunits. K(+) serves as cofactor.

It is found in the cytoplasm. In terms of biological role, exhibits a very high intrinsic GTPase hydrolysis rate. Involved in the addition of a carboxymethylaminomethyl (cmnm) group at the wobble position (U34) of certain tRNAs, forming tRNA-cmnm(5)s(2)U34. In Chlamydia felis (strain Fe/C-56) (Chlamydophila felis), this protein is tRNA modification GTPase MnmE.